A 320-amino-acid polypeptide reads, in one-letter code: NADH-ubiquinone oxidoreductase chain 1 (320 aa).

Helical transmembrane passes span 3–23 (LITIINPLTYIVPILIAVAFL), 72–92 (ILLILSPVLALTMAMLIWTPI), 103–123 (LGFLSILAISSMAVNSILWAG), 147–167 (VTLGIILLSILILTGGFTMQL), 174–194 (HIWLLATSWPLMMMWFISTLA), 226–246 (FFLAEYANIISMNLLTCILFI), 255–275 (ELFLINLITKTMILTLTFLWI), and 295–315 (FLPLTMALCLLHVSLLISISG).

Belongs to the complex I subunit 1 family.

It is found in the mitochondrion inner membrane. It catalyses the reaction a ubiquinone + NADH + 5 H(+)(in) = a ubiquinol + NAD(+) + 4 H(+)(out). Its function is as follows. Core subunit of the mitochondrial membrane respiratory chain NADH dehydrogenase (Complex I) that is believed to belong to the minimal assembly required for catalysis. Complex I functions in the transfer of electrons from NADH to the respiratory chain. The immediate electron acceptor for the enzyme is believed to be ubiquinone. The chain is NADH-ubiquinone oxidoreductase chain 1 (MT-ND1) from Varanus jobiensis (Peach throat monitor).